A 270-amino-acid polypeptide reads, in one-letter code: Small ribosomal subunit protein eS1 (270 aa).

Disordered regions lie at residues 1 to 20 (MAVG…SKKK) and 238 to 270 (GGGK…QESV).

It belongs to the eukaryotic ribosomal protein eS1 family. As to quaternary structure, component of the small ribosomal subunit. Mature ribosomes consist of a small (40S) and a large (60S) subunit. The 40S subunit contains about 33 different proteins and 1 molecule of RNA (18S). The 60S subunit contains about 49 different proteins and 3 molecules of RNA (28S, 5.8S and 5S).

The protein resides in the cytoplasm. The sequence is that of Small ribosomal subunit protein eS1 from Culex quinquefasciatus (Southern house mosquito).